A 207-amino-acid polypeptide reads, in one-letter code: uncharacterized protein (207 aa).

Residues M1–A19 form the signal peptide.

It to P.multocida PM1509.

This is an uncharacterized protein from Pasteurella multocida (strain Pm70).